The primary structure comprises 918 residues: Interleukin-6 receptor subunit beta (918 aa).

The first 22 residues, 1–22 (MLTLQTWLVQALFIFLTTESTG), serve as a signal peptide directing secretion. Over 23–619 (ELLDPCGYIS…TPKFAQGEIE (597 aa)) the chain is Extracellular. The Ig-like C2-type domain occupies 26 to 120 (DPCGYISPES…LEQNVYGITI (95 aa)). 2 disulfides stabilise this stretch: C28–C54 and C48–C103. N43, N83, and N131 each carry an N-linked (GlcNAc...) asparagine glycan. Fibronectin type-III domains lie at 125 to 216 (PPEK…NFDP), 224 to 324 (PPHN…TYED), 329 to 424 (APSF…FQAT), 426 to 517 (PVMD…LKQA), and 518 to 613 (PPSK…TPKF). The cysteines at positions 134 and 144 are disulfide-linked. Residue N157 is glycosylated (N-linked (GlcNAc...) asparagine). A disulfide bridge connects residues C172 and C182. N-linked (GlcNAc...) asparagine glycosylation occurs at N227. Positions 310-314 (WSDWS) match the WSXWS motif motif. N379 and N383 each carry an N-linked (GlcNAc...) asparagine glycan. N-linked (GlcNAc...) (complex) asparagine glycosylation occurs at N390. C458 and C466 are oxidised to a cystine. N-linked (GlcNAc...) asparagine glycans are attached at residues N553 and N564. The helical transmembrane segment at 620–641 (AIVVPVCLAFLLTTLLGVLFCF) threads the bilayer. The Cytoplasmic portion of the chain corresponds to 642 to 918 (NKRDLIKKHI…TVRQGGYMPQ (277 aa)). Positions 651-659 (IWPNVPDPS) match the Box 1 motif motif. 2 disordered regions span residues 660 to 681 (KSHI…SKDQ) and 722 to 758 (EGHS…STVQ). Phosphoserine is present on residues S661 and S667. Residues 731 to 755 (SSCMSSSRPSISSSDENESSQNTSS) show a composition bias toward low complexity. Phosphoserine occurs at positions 782, 789, 829, and 839.

This sequence belongs to the type I cytokine receptor family. Type 2 subfamily. As to quaternary structure, component of a hexamer of two molecules each of IL6, IL6R and IL6ST; associates with the complex IL6:IL6R but does not interact with IL6. Forms heterodimers composed of LIFR and IL6ST (type I OSM receptor) which are activated by LIF and OSM. Also forms heterodimers composed of OSMR and IL6ST (type II receptor) which are activated by OSM but not by LIF. Component of a receptor complex composed of IL6ST/GP130, IL27RA/WSX1 and CNTFR which interacts with the neuroprotective peptide humanin. Interacts with HCK. Interacts with INPP5D/SHIP1. Interacts with SRC and YES. Interacts with ARMH4; this interaction prevents IL6ST protein homodimerization and bridges ARMH4 with IL6R and STAT3 and therefore inhibits phosphorylation of STAT3 at 'Tyr-705'. (Microbial infection) The homodimer binds two molecules of herpes virus 8/HHV-8 protein vIL-6. Phosphorylation of Ser-782 down-regulates cell surface expression. Post-translationally, heavily N-glycosylated. Glycosylation is required for protein stability and localization in plasma membrane but not for ligand binding. In terms of tissue distribution, found in all the tissues and cell lines examined. Expression not restricted to IL6 responsive cells. Expressed in blood serum (at protein level).

The protein resides in the cell membrane. Its subcellular location is the secreted. In terms of biological role, signal-transducing molecule. The receptor systems for IL6, LIF, OSM, CNTF, IL11, CTF1 and BSF3 can utilize IL6ST for initiating signal transmission. Binding of IL6 to IL6R induces IL6ST homodimerization and formation of a high-affinity receptor complex, which activates the intracellular JAK-MAPK and JAK-STAT3 signaling pathways. That causes phosphorylation of IL6ST tyrosine residues which in turn activates STAT3. In parallel, the IL6 signaling pathway induces the expression of two cytokine receptor signaling inhibitors, SOCS1 and SOCS3, which inhibit JAK and terminate the activity of the IL6 signaling pathway as a negative feedback loop. Also activates the yes-associated protein 1 (YAP) and NOTCH pathways to control inflammation-induced epithelial regeneration, independently of STAT3. Acts as a receptor for the neuroprotective peptide humanin as part of a complex with IL27RA/WSX1 and CNTFR. Mediates signals which regulate immune response, hematopoiesis, pain control and bone metabolism. Has a role in embryonic development. Essential for survival of motor and sensory neurons and for differentiation of astrocytes. Required for expression of TRPA1 in nociceptive neurons. Required for the maintenance of PTH1R expression in the osteoblast lineage and for the stimulation of PTH-induced osteoblast differentiation. Required for normal trabecular bone mass and cortical bone composition. Its function is as follows. Binds to the soluble IL6:sIL6R complex (hyper-IL6), thereby blocking IL6 trans-signaling. Inhibits sIL6R-dependent acute phase response. Also blocks IL11 cluster signaling through IL11R. In Homo sapiens (Human), this protein is Interleukin-6 receptor subunit beta.